The following is a 378-amino-acid chain: Acetylornithine deacetylase (378 aa).

Residue His76 coordinates Zn(2+). Residue Asp78 is part of the active site. Zn(2+) is bound at residue Asp108. Glu140 is a catalytic residue. Positions 141, 165, and 351 each coordinate Zn(2+).

Belongs to the peptidase M20A family. ArgE subfamily. In terms of assembly, homodimer. The cofactor is Zn(2+). Co(2+) is required as a cofactor. Requires glutathione as cofactor.

The protein localises to the cytoplasm. It carries out the reaction N(2)-acetyl-L-ornithine + H2O = L-ornithine + acetate. Its pathway is amino-acid biosynthesis; L-arginine biosynthesis; L-ornithine from N(2)-acetyl-L-ornithine (linear): step 1/1. Its function is as follows. Catalyzes the hydrolysis of the amide bond of N(2)-acetylated L-amino acids. Cleaves the acetyl group from N-acetyl-L-ornithine to form L-ornithine, an intermediate in L-arginine biosynthesis pathway, and a branchpoint in the synthesis of polyamines. The sequence is that of Acetylornithine deacetylase from Vibrio vulnificus (strain CMCP6).